The following is a 111-amino-acid chain: Putative FAD-linked sulfhydryl oxidase 347L (111 aa).

Residues 2–109 (TDIDPHIWGP…LPESVARKKW (108 aa)) form the ERV/ALR sulfhydryl oxidase domain. Cysteines 49 and 52 form a disulfide.

It belongs to the IIV-6 347L family. The cofactor is FAD.

It catalyses the reaction 2 R'C(R)SH + O2 = R'C(R)S-S(R)CR' + H2O2. FAD-dependent sulfhydryl oxidase that catalyzes disulfide bond formation. This is Putative FAD-linked sulfhydryl oxidase 347L from Invertebrate iridescent virus 6 (IIV-6).